The chain runs to 160 residues: MESPEGAGPGEITKEVKVPQAAPSVPAHETGDTCHTPVAAVEEEVGIPIPAPGFLQVTERRQPLSSVSSLEVHFDLLDLTELTDMSDQELAEVFADSDDENLATESPAGLHPLSRASCLRSPSWTKTRAEQNREKQTPSDPERQGTIVDTFLTVEEPKED.

Disordered regions lie at residues 1–34 and 95–160; these read MESP…GDTC and ADSD…PKED. Phosphoserine occurs at positions 3, 97, and 121. Over residues 127–143 the composition is skewed to basic and acidic residues; the sequence is TRAEQNREKQTPSDPER.

This sequence belongs to the dysbindin family.

This is Dysbindin domain-containing protein 1 (Dbndd1) from Rattus norvegicus (Rat).